Reading from the N-terminus, the 161-residue chain is Nucleotide-binding protein Vapar_3769 (161 aa).

It belongs to the YajQ family.

Nucleotide-binding protein. The chain is Nucleotide-binding protein Vapar_3769 from Variovorax paradoxus (strain S110).